A 548-amino-acid polypeptide reads, in one-letter code: Glucose-6-phosphate isomerase (548 aa).

The active-site Proton donor is Glu-354. Catalysis depends on residues His-385 and Lys-513.

This sequence belongs to the GPI family.

The protein localises to the cytoplasm. The catalysed reaction is alpha-D-glucose 6-phosphate = beta-D-fructose 6-phosphate. Its pathway is carbohydrate biosynthesis; gluconeogenesis. It functions in the pathway carbohydrate degradation; glycolysis; D-glyceraldehyde 3-phosphate and glycerone phosphate from D-glucose: step 2/4. Catalyzes the reversible isomerization of glucose-6-phosphate to fructose-6-phosphate. The sequence is that of Glucose-6-phosphate isomerase from Marinomonas sp. (strain MWYL1).